Here is a 1127-residue protein sequence, read N- to C-terminus: Caprin-2 (1127 aa).

Positions 67-108 are disordered; the sequence is YQSPSGHSEEEREGNMKSAKPQVNHSQHGESQRALSPLQSTL. A compositionally biased stretch (polar residues) spans 99-108; that stretch reads RALSPLQSTL. Coiled-coil stretches lie at residues 129-156 and 194-216; these read LKHK…GEHL and AQKK…KLRT. Disordered regions lie at residues 382–614, 642–753, and 922–975; these read NKQG…KDPV, DKPS…SSSV, and QCYK…PVDV. Basic and acidic residues-rich tracts occupy residues 402–432 and 440–464; these read KRWD…HQEV and EQRK…EISK. 2 stretches are compositionally biased toward polar residues: residues 512 to 531 and 544 to 567; these read PKSW…SWTT and TPKS…QISP. Positions 588–597 are enriched in basic and acidic residues; it reads LNTEPKDVPK. 2 stretches are compositionally biased toward polar residues: residues 665-714 and 741-753; these read KEQN…TSET and QGFQ…SSSV. 2 positions are modified to phosphoserine: Ser-948 and Ser-949. Polar residues predominate over residues 956–970; sequence TFNSGDSGQGDSRSM. Positions 993–1127 constitute a C1q domain; sequence PQQMRVAFSA…TFSGYLLYQD (135 aa). Ca(2+) is bound by residues Asp-1078 and Glu-1084.

Belongs to the caprin family. In terms of assembly, homotrimer; via C1q domain. Found in a complex with LRP6, CCNY and CDK14 during G2/M stage; CAPRIN2 functions as a scaffold for the complex by binding to CCNY via its N terminus and to CDK14 via its C terminus. Interacts with LRP5. Interacts with LRP6. In terms of tissue distribution, detected in all tissues tested with highest levels of expression in brain and spleen.

Its subcellular location is the cytoplasm. It localises to the mitochondrion. The protein resides in the cell membrane. Its function is as follows. Promotes phosphorylation of the Wnt coreceptor LRP6, leading to increased activity of the canonical Wnt signaling pathway. Facilitates constitutive LRP6 phosphorylation by CDK14/CCNY during G2/M stage of the cell cycle, which may potentiate cells for Wnt signaling. May regulate the transport and translation of mRNAs, modulating for instance the expression of proteins involved in synaptic plasticity in neurons. Involved in regulation of growth as erythroblasts shift from a highly proliferative state towards their terminal phase of differentiation. May be involved in apoptosis. The sequence is that of Caprin-2 from Homo sapiens (Human).